The primary structure comprises 338 residues: Heat-inducible transcription repressor HrcA (338 aa).

Belongs to the HrcA family.

Its function is as follows. Negative regulator of class I heat shock genes (grpE-dnaK-dnaJ and groELS operons). Prevents heat-shock induction of these operons. This is Heat-inducible transcription repressor HrcA from Bacillus cereus (strain AH820).